The chain runs to 856 residues: MAP kinase phosphatase with leucine-rich repeats protein 3 (856 aa).

Positions 1–10 are enriched in low complexity; the sequence is MGNSHSSENG. 3 disordered regions span residues 1–24, 84–195, and 214–326; these read MGNS…GGGS, VKKN…SSVL, and DDNS…NAKD. Glycine 2 carries the N-myristoyl glycine lipid modification. The span at 11-24 shows a compositional bias: gly residues; it reads GNSGSGGGSGGGGS. The segment covering 90-142 has biased composition (low complexity); that stretch reads NSSNNNSNNNSNNNNNNNTLNNSTIITTTTTTTTTSTPTTTIMITPPQQQQQQ. Residues 155–165 are compositionally biased toward polar residues; the sequence is ESSTPNEQQIR. 2 stretches are compositionally biased toward low complexity: residues 178–195 and 224–243; these read ESSF…SSVL and QQQQ…QQTQ. Polar residues-rich tracts occupy residues 254–265 and 272–281; these read IVNNKSSSTTNI and AQTSRSTSIP. Residues 306-323 are compositionally biased toward low complexity; that stretch reads NSLSSSNIITPNNTTNTN. LRR repeat units follow at residues 344–365, 370–391, 392–413, 416–437, 439–461, 462–484, 485–506, and 507–528; these read KIFS…ILSI, EIQE…QLVK, SLTT…VFIE, SLTS…IDQI, NLKY…SNLS, QLIS…DDLI, NLRM…RKLV, and NLVT…FAYL. Positions 554–577 are disordered; sequence NINSNNNDSNNSNNNNNNNNDNNN. The 142-residue stretch at 632-773 folds into the Tyrosine-protein phosphatase domain; the sequence is IPSEIIPGIF…LLKYEAKLFC (142 aa). Cysteine 717 functions as the Phosphocysteine intermediate in the catalytic mechanism. The disordered stretch occupies residues 810 to 856; that stretch reads INNSSNSNNNNSTDNSNNSSTSTTPNLSSLSSDSSSSASLSKLSISK.

It belongs to the protein-tyrosine phosphatase family. Non-receptor class dual specificity subfamily.

It carries out the reaction O-phospho-L-tyrosyl-[protein] + H2O = L-tyrosyl-[protein] + phosphate. The enzyme catalyses O-phospho-L-seryl-[protein] + H2O = L-seryl-[protein] + phosphate. It catalyses the reaction O-phospho-L-threonyl-[protein] + H2O = L-threonyl-[protein] + phosphate. Probable phosphatase with dual specificity toward Ser/Thr and Tyr-containing proteins. This Dictyostelium discoideum (Social amoeba) protein is MAP kinase phosphatase with leucine-rich repeats protein 3 (mpl3).